The following is a 664-amino-acid chain: DNA ligase (664 aa).

NAD(+) contacts are provided by residues 31 to 35 (DSTYD), 80 to 81 (SL), and glutamate 110. Residue lysine 112 is the N6-AMP-lysine intermediate of the active site. 4 residues coordinate NAD(+): arginine 133, glutamate 167, lysine 282, and lysine 306. Zn(2+) contacts are provided by cysteine 400, cysteine 403, cysteine 418, and cysteine 423. Residues 583 to 664 (QSNAPLAGKT…LLEELAKYEG (82 aa)) enclose the BRCT domain.

Belongs to the NAD-dependent DNA ligase family. LigA subfamily. Requires Mg(2+) as cofactor. It depends on Mn(2+) as a cofactor.

It catalyses the reaction NAD(+) + (deoxyribonucleotide)n-3'-hydroxyl + 5'-phospho-(deoxyribonucleotide)m = (deoxyribonucleotide)n+m + AMP + beta-nicotinamide D-nucleotide.. DNA ligase that catalyzes the formation of phosphodiester linkages between 5'-phosphoryl and 3'-hydroxyl groups in double-stranded DNA using NAD as a coenzyme and as the energy source for the reaction. It is essential for DNA replication and repair of damaged DNA. This Exiguobacterium sibiricum (strain DSM 17290 / CCUG 55495 / CIP 109462 / JCM 13490 / 255-15) protein is DNA ligase.